Consider the following 491-residue polypeptide: Cadherin-3 (491 aa).

Cadherin domains follow at residues 1-102 (ENTV…PPVF), 103-208 (VPPS…DHGP), and 209-314 (VPEP…DPWT). Over 1–316 (ENTVSHEVQR…VTCRDPWTWG (316 aa)) the chain is Extracellular. N-linked (GlcNAc...) asparagine glycosylation occurs at Asn-228. A helical membrane pass occupies residues 317–339 (FLLPILGAALALLLLLLVLLFLV). The Cytoplasmic portion of the chain corresponds to 340–491 (RKKRKIKEPL…ADMYGGGQDD (152 aa)).

Interacts with CDCP1 and CTNNB1.

It is found in the cell membrane. Its function is as follows. Cadherins are calcium-dependent cell adhesion proteins. They preferentially interact with themselves in a homophilic manner in connecting cells; cadherins may thus contribute to the sorting of heterogeneous cell types. The sequence is that of Cadherin-3 (CDH3) from Bos taurus (Bovine).